The chain runs to 429 residues: Glutamate-1-semialdehyde 2,1-aminomutase (429 aa).

Lys-265 is modified (N6-(pyridoxal phosphate)lysine).

The protein belongs to the class-III pyridoxal-phosphate-dependent aminotransferase family. HemL subfamily. In terms of assembly, homodimer. Pyridoxal 5'-phosphate is required as a cofactor.

The protein localises to the cytoplasm. It catalyses the reaction (S)-4-amino-5-oxopentanoate = 5-aminolevulinate. The protein operates within porphyrin-containing compound metabolism; protoporphyrin-IX biosynthesis; 5-aminolevulinate from L-glutamyl-tRNA(Glu): step 2/2. The sequence is that of Glutamate-1-semialdehyde 2,1-aminomutase from Alkalilimnicola ehrlichii (strain ATCC BAA-1101 / DSM 17681 / MLHE-1).